The chain runs to 63 residues: Hirudin-P6 (63 aa).

The segment at 1 to 3 (MRY) is interaction with thrombin active site. Disulfide bonds link cysteine 6/cysteine 14, cysteine 16/cysteine 28, and cysteine 22/cysteine 37. Over residues 35-55 (KKCVEGEGTRKPQNEGQHDFD) the composition is skewed to basic and acidic residues. The interval 35–63 (KKCVEGEGTRKPQNEGQHDFDPIPEEYLS) is disordered. Threonine 43 is a glycosylation site (O-linked (GalNAc...) threonine). The interval 53-63 (DFDPIPEEYLS) is interaction with fibrinogen-binding exosite of thrombin. A Sulfotyrosine modification is found at tyrosine 61.

Belongs to the protease inhibitor I14 (hirudin) family. In terms of processing, O-linked glycan consists of Fuc-Gal-GalNAc trisaccharide.

The protein resides in the secreted. Hirudin is a potent thrombin-specific protease inhibitor. It forms a stable non-covalent complex with alpha-thrombin, thereby abolishing its ability to cleave fibrinogen. This chain is Hirudin-P6, found in Hirudinaria manillensis (Asian medical leech).